The following is a 185-amino-acid chain: Ribosome-recycling factor (185 aa).

A disordered region spans residues 140 to 168 (KKEQKDGNITEDEQRNLEKQVQKITDDST).

The protein belongs to the RRF family.

It is found in the cytoplasm. Functionally, responsible for the release of ribosomes from messenger RNA at the termination of protein biosynthesis. May increase the efficiency of translation by recycling ribosomes from one round of translation to another. In Lactobacillus helveticus (strain DPC 4571), this protein is Ribosome-recycling factor.